Reading from the N-terminus, the 199-residue chain is FMN-dependent NADH:quinone oxidoreductase 2 (199 aa).

Residues Ser10, 17–19 (SDS), and 135–138 (TKGG) each bind FMN.

Belongs to the azoreductase type 1 family. In terms of assembly, homodimer. Requires FMN as cofactor.

It catalyses the reaction 2 a quinone + NADH + H(+) = 2 a 1,4-benzosemiquinone + NAD(+). The enzyme catalyses N,N-dimethyl-1,4-phenylenediamine + anthranilate + 2 NAD(+) = 2-(4-dimethylaminophenyl)diazenylbenzoate + 2 NADH + 2 H(+). Its function is as follows. Quinone reductase that provides resistance to thiol-specific stress caused by electrophilic quinones. Functionally, also exhibits azoreductase activity. Catalyzes the reductive cleavage of the azo bond in aromatic azo compounds to the corresponding amines. The sequence is that of FMN-dependent NADH:quinone oxidoreductase 2 from Mesoplasma florum (strain ATCC 33453 / NBRC 100688 / NCTC 11704 / L1) (Acholeplasma florum).